We begin with the raw amino-acid sequence, 51 residues long: Non-specific lipid-transfer protein (51 aa).

This sequence belongs to the plant LTP family.

Functionally, plant non-specific lipid-transfer proteins transfer phospholipids as well as galactolipids across membranes. May play a role in wax or cutin deposition in the cell walls of expanding epidermal cells and certain secretory tissues. The protein is Non-specific lipid-transfer protein of Lycium barbarum (Barbary matrimony-vine).